The sequence spans 78 residues: Major outer membrane lipoprotein Lpp (78 aa).

Positions methionine 1–glycine 20 are cleaved as a signal peptide. Cysteine 21 carries the N-palmitoyl cysteine lipid modification. Cysteine 21 carries the S-diacylglycerol cysteine lipid modification. Repeats lie at residues threonine 24–isoleucine 34 and asparagine 38–valine 48. Positions valine 27–serine 75 form a coiled coil. Position 78 is an N6-murein peptidoglycan lysine (lysine 78).

It belongs to the Lpp family. As to quaternary structure, homotrimer.

Its subcellular location is the cell outer membrane. It is found in the secreted. The protein localises to the cell wall. Functionally, a highly abundant outer membrane lipoprotein that controls the distance between the inner and outer membranes. The only protein known to be covalently linked to the peptidoglycan network (PGN). Also non-covalently binds the PGN. The link between the cell outer membrane and PGN contributes to maintenance of the structural and functional integrity of the cell envelope, and maintains the correct distance between the PGN and the outer membrane. The polypeptide is Major outer membrane lipoprotein Lpp (Photorhabdus laumondii subsp. laumondii (strain DSM 15139 / CIP 105565 / TT01) (Photorhabdus luminescens subsp. laumondii)).